We begin with the raw amino-acid sequence, 835 residues long: Protein translocase subunit SecA (835 aa).

ATP-binding positions include Q85, 103 to 107 (GEGKT), and D492. Zn(2+)-binding residues include C819, C821, C830, and C831.

This sequence belongs to the SecA family. In terms of assembly, monomer and homodimer. Part of the essential Sec protein translocation apparatus which comprises SecA, SecYEG and auxiliary proteins SecDF. Other proteins may also be involved. Zn(2+) serves as cofactor.

The protein resides in the cell membrane. It is found in the cytoplasm. The catalysed reaction is ATP + H2O + cellular proteinSide 1 = ADP + phosphate + cellular proteinSide 2.. Part of the Sec protein translocase complex. Interacts with the SecYEG preprotein conducting channel. Has a central role in coupling the hydrolysis of ATP to the transfer of proteins into and across the cell membrane, serving as an ATP-driven molecular motor driving the stepwise translocation of polypeptide chains across the membrane. The polypeptide is Protein translocase subunit SecA (Clostridium botulinum (strain Loch Maree / Type A3)).